The primary structure comprises 416 residues: Tyrosine--tRNA ligase (416 aa).

Residue Tyr-34 participates in L-tyrosine binding. The 'HIGH' region motif lies at 39–48; the sequence is PTGDSLHIGH. L-tyrosine is bound by residues Tyr-165 and Gln-169. Residues 227–231 carry the 'KMSKS' region motif; the sequence is KFGKT. An ATP-binding site is contributed by Lys-230. One can recognise an S4 RNA-binding domain in the interval 349 to 416; it reads ENIIIWLTDN…KKHYYLARVK (68 aa).

Belongs to the class-I aminoacyl-tRNA synthetase family. TyrS type 1 subfamily. Homodimer.

It is found in the cytoplasm. The enzyme catalyses tRNA(Tyr) + L-tyrosine + ATP = L-tyrosyl-tRNA(Tyr) + AMP + diphosphate + H(+). In terms of biological role, catalyzes the attachment of tyrosine to tRNA(Tyr) in a two-step reaction: tyrosine is first activated by ATP to form Tyr-AMP and then transferred to the acceptor end of tRNA(Tyr). In Limosilactobacillus reuteri (strain DSM 20016) (Lactobacillus reuteri), this protein is Tyrosine--tRNA ligase.